Consider the following 593-residue polypeptide: FAD-binding monooxygenase acrE (593 aa).

Residues 61 to 64, 73 to 74, and tyrosine 79 contribute to the FAD site; these read TWRF and DS. 71 to 73 provides a ligand contact to NADP(+); the sequence is RVD. NADP(+)-binding positions include 200-206 and 223-224; these read TGASGVQ and RS.

The protein belongs to the FAD-binding monooxygenase family. Requires FAD as cofactor.

It participates in secondary metabolite biosynthesis. Functionally, FAD-binding monooxygenase; part of the cluster that mediates the biosynthesis of acurin A, a highly reduced polyketide coupled to a serine via a peptide bond. The activities of the highly reducing polyketide synthase acrA and the nonribosomal peptide synthetase acrB are collectively responsible for the synthesis of the acurin A core structure with a heptaketide backbone produced by acrA covalently fused to a L-serine by acrB. After the formation of the PK-NRP hybrid product, it is detached from acrB by reductive release to set up the formation of the lactam ring by aldol condensation. The hydrolyase acrC then catalyzes water loss to generate a double bond in the ring. This double bond is probably reduced, which is followed by three oxidations at C-22 to generate the carboxylic acid moiety, involving probably the FAD-binding monooxygenase acrE and the cytochrome P450 monooxygenases acrD and acrF. Finally, a last methylation step performed by the O-methyltransferase acrG leads to the production of acurin A. This Aspergillus aculeatus (strain ATCC 16872 / CBS 172.66 / WB 5094) protein is FAD-binding monooxygenase acrE.